A 276-amino-acid chain; its full sequence is Urease accessory protein UreD (276 aa).

This sequence belongs to the UreD family. In terms of assembly, ureD, UreF and UreG form a complex that acts as a GTP-hydrolysis-dependent molecular chaperone, activating the urease apoprotein by helping to assemble the nickel containing metallocenter of UreC. The UreE protein probably delivers the nickel.

The protein localises to the cytoplasm. Functionally, required for maturation of urease via the functional incorporation of the urease nickel metallocenter. The chain is Urease accessory protein UreD from Polaromonas sp. (strain JS666 / ATCC BAA-500).